A 445-amino-acid chain; its full sequence is N-succinylarginine dihydrolase (445 aa).

Residues 19-28, asparagine 110, and 137-138 contribute to the substrate site; these read AGLSFGNVAS and HR. The active site involves glutamate 174. Arginine 214 lines the substrate pocket. The active site involves histidine 250. The substrate site is built by aspartate 252 and asparagine 363. Cysteine 369 acts as the Nucleophile in catalysis.

The protein belongs to the succinylarginine dihydrolase family. Homodimer.

It carries out the reaction N(2)-succinyl-L-arginine + 2 H2O + 2 H(+) = N(2)-succinyl-L-ornithine + 2 NH4(+) + CO2. It functions in the pathway amino-acid degradation; L-arginine degradation via AST pathway; L-glutamate and succinate from L-arginine: step 2/5. In terms of biological role, catalyzes the hydrolysis of N(2)-succinylarginine into N(2)-succinylornithine, ammonia and CO(2). The sequence is that of N-succinylarginine dihydrolase from Shewanella sediminis (strain HAW-EB3).